The following is a 440-amino-acid chain: Exosome complex component RRP45 (440 aa).

Serine 65 is modified (phosphoserine). Lysine 297 carries the N6-acetyllysine; alternate modification. Lysine 297 participates in a covalent cross-link: Glycyl lysine isopeptide (Lys-Gly) (interchain with G-Cter in SUMO1); alternate. Lysine 297 participates in a covalent cross-link: Glycyl lysine isopeptide (Lys-Gly) (interchain with G-Cter in SUMO2); alternate. Phosphoserine occurs at positions 306 and 346. Residues 341 to 362 (EGIENSWGHLEDSEKEDEDEGG) form a disordered region. Residues 353–362 (SEKEDEDEGG) are compositionally biased toward acidic residues. A phosphoserine mark is found at serine 393 and serine 395. The interval 404–440 (EPDKNPKKIRTQTISATQVKAPSKKPVKKRKKKRAAN) is disordered. Positions 425–440 (PSKKPVKKRKKKRAAN) are enriched in basic residues.

The protein belongs to the RNase PH family. In terms of assembly, component of the RNA exosome core complex (Exo-9), composed of EXOSC1, EXOSC2, EXOSC3, EXOSC4, EXOSC5, EXOSC6, EXOSC7, EXOSC8 and EXOSC9; within the complex interacts with EXOSC3, EXOSC4, EXOSC5 and DIS3. The catalytically inactive RNA exosome core complex (Exo-9) associates with the catalytic subunit EXOSC10/RRP6. Exo-9 may associate with DIS3 to form the nucleolar exosome complex, or DIS3L to form the cytoplasmic exosome complex. Exo-9 is formed by a hexameric base ring consisting of the heterodimers EXOSC4-EXOSC9, EXOSC5-EXOSC8 and EXOSC6-EXOSC7, and a cap ring consisting of EXOSC1, EXOSC2 and EXOSC3. The RNA exosome complex associates with cofactors C1D/RRP47, MPHOSPH6/MPP6 and MTREX/MTR4. Interacts (via C-terminus region) with SETX (via N-terminus domain); the interaction enhances SETX sumoylation. Interacts with DIS3; the interaction is direct.

The protein localises to the cytoplasm. Its subcellular location is the nucleus. It is found in the nucleolus. It localises to the nucleoplasm. Its function is as follows. Non-catalytic component of the RNA exosome complex which has 3'-&gt;5' exoribonuclease activity and participates in a multitude of cellular RNA processing and degradation events. In the nucleus, the RNA exosome complex is involved in proper maturation of stable RNA species such as rRNA, snRNA and snoRNA, in the elimination of RNA processing by-products and non-coding 'pervasive' transcripts, such as antisense RNA species and promoter-upstream transcripts (PROMPTs), and of mRNAs with processing defects, thereby limiting or excluding their export to the cytoplasm. The RNA exosome may be involved in Ig class switch recombination (CSR) and/or Ig variable region somatic hypermutation (SHM) by targeting AICDA deamination activity to transcribed dsDNA substrates. In the cytoplasm, the RNA exosome complex is involved in general mRNA turnover and specifically degrades inherently unstable mRNAs containing AU-rich elements (AREs) within their 3' untranslated regions, and in RNA surveillance pathways, preventing translation of aberrant mRNAs. It seems to be involved in degradation of histone mRNA. The catalytic inactive RNA exosome core complex of 9 subunits (Exo-9) is proposed to play a pivotal role in the binding and presentation of RNA for ribonucleolysis, and to serve as a scaffold for the association with catalytic subunits and accessory proteins or complexes. EXOSC9 binds to ARE-containing RNAs. The polypeptide is Exosome complex component RRP45 (EXOSC9) (Bos taurus (Bovine)).